Consider the following 193-residue polypeptide: Acyl carrier protein phosphodiesterase (193 aa).

Belongs to the AcpH family.

The enzyme catalyses holo-[ACP] + H2O = apo-[ACP] + (R)-4'-phosphopantetheine + H(+). Functionally, converts holo-ACP to apo-ACP by hydrolytic cleavage of the phosphopantetheine prosthetic group from ACP. The protein is Acyl carrier protein phosphodiesterase of Escherichia coli O6:K15:H31 (strain 536 / UPEC).